Reading from the N-terminus, the 313-residue chain is Peroxidase 57 (313 aa).

An N-terminal signal peptide occupies residues 1–22 (MMKGAKFSSLLVLFFIFPIAFA). 4 disulfides stabilise this stretch: C33–C109, C66–C71, C115–C309, and C192–C224. The active-site Proton acceptor is H64. D65, V68, G70, D72, and S74 together coordinate Ca(2+). P155 contacts substrate. Position 185 (H185) interacts with heme b. A Ca(2+)-binding site is contributed by T186. D233, S236, and D241 together coordinate Ca(2+).

The protein belongs to the peroxidase family. Classical plant (class III) peroxidase subfamily. Requires heme b as cofactor. Ca(2+) is required as a cofactor. As to expression, mainly expressed in roots.

It is found in the secreted. It catalyses the reaction 2 a phenolic donor + H2O2 = 2 a phenolic radical donor + 2 H2O. Its function is as follows. Removal of H(2)O(2), oxidation of toxic reductants, biosynthesis and degradation of lignin, suberization, auxin catabolism, response to environmental stresses such as wounding, pathogen attack and oxidative stress. These functions might be dependent on each isozyme/isoform in each plant tissue. The protein is Peroxidase 57 (PER57) of Arabidopsis thaliana (Mouse-ear cress).